The chain runs to 587 residues: Calcium/calmodulin-dependent protein kinase kinase 2 (587 aa).

Positions 1-11 (MSSCVSSQPTS) are enriched in polar residues. 2 disordered regions span residues 1 to 32 (MSSC…SQKP) and 74 to 115 (EADG…SSLD). The residue at position 2 (Ser2) is an N-acetylserine. Phosphoserine is present on residues Ser99, Ser113, Ser128, Ser132, and Ser136. A compositionally biased stretch (polar residues) spans 101-115 (QERSQGGPASSSSLD). A Protein kinase domain is found at 164–445 (YTLKDEIGKG…VPEIKLHPWV (282 aa)). ATP-binding positions include 170–178 (IGKGSYGVV) and Lys193. The segment at 203–225 (QAGFPRRPPPRGTRPAPGGCIQP) is RP domain. The disordered stretch occupies residues 204 to 224 (AGFPRRPPPRGTRPAPGGCIQ). Residue Asp311 is the Proton acceptor of the active site. An autoinhibitory domain region spans residues 471 to 476 (ENSVKH). Positions 474–499 (VKHIPSLATVILVKTMIRKRSFGNPF) are calmodulin-binding. Ser494 and Ser510 each carry phosphoserine. The tract at residues 496–587 (GNPFEGSRRE…QQPEEAMEPE (92 aa)) is disordered. The segment covering 520–535 (PTREWEPLSEPKEARQ) has biased composition (basic and acidic residues). Pro residues predominate over residues 569–579 (PGSPPRTPPQQ). The residue at position 571 (Ser571) is a Phosphoserine.

This sequence belongs to the protein kinase superfamily. Ser/Thr protein kinase family. As to quaternary structure, interacts with calmodulin. In terms of processing, phosphorylated by PKA. Each isoform may show a different pattern of phosphorylation. Autophosphorylated. In terms of tissue distribution, mainly expressed in brain, but detected in all tissues tested (at protein level). In the brain, isoform 1 may be predominant. with high levels in the cerebellum and hippocampus, although isoform 3 is detectable. Isoform 3 is also expressed in lung.

It is found in the nucleus. It localises to the cytoplasm. Its subcellular location is the cell projection. The protein localises to the neuron projection. The enzyme catalyses L-seryl-[protein] + ATP = O-phospho-L-seryl-[protein] + ADP + H(+). It carries out the reaction L-threonyl-[protein] + ATP = O-phospho-L-threonyl-[protein] + ADP + H(+). With respect to regulation, activated by Ca(2+)/calmodulin. Binding of calmodulin may relieve intrasteric autoinhibition. Autophosphorylation does not alter activity or regulation by Ca(2+)/calmodulin. In part, activity is independent on Ca(2+)/calmodulin. Its function is as follows. Calcium/calmodulin-dependent protein kinase belonging to a proposed calcium-triggered signaling cascade involved in a number of cellular processes. Phosphorylates CAMK1 and CAMK4. Phosphorylates CAMK1D. Seems to be involved in hippocampal activation of CREB1. Efficiently phosphorylates 5'-AMP-activated protein kinase (AMPK) trimer, including that consisting of PRKAA1, PRKAB1 and PRKAG1. This phosphorylation is stimulated in response to Ca(2+) signals. May play a role in neurite growth. Isoform 2 may promote neurite elongation, while isoform 1 may promoter neurite branching. The sequence is that of Calcium/calmodulin-dependent protein kinase kinase 2 (Camkk2) from Rattus norvegicus (Rat).